The primary structure comprises 136 residues: Orexigenic neuropeptide QRFP (136 aa).

The first 18 residues, 1–18 (MVRPYPLIYFLFLPLGAC), serve as a signal peptide directing secretion. Residues 19–90 (FPLLDRREPT…HAGCRFRFGR (72 aa)) constitute a propeptide that is removed on maturation. At Gln91 the chain carries Pyrrolidone carboxylic acid. Residue Phe133 is modified to Phenylalanine amide.

It belongs to the RFamide neuropeptide family. Ligand for the G-protein coupled receptor QRFPR/GPR103. Expressed widely in the brain with highest expression levels in the cerebellum, medulla, pituitary, retina, vestibular nucleus, and white matter. Also expressed in the bladder, colon, coronary artery, parathyroid gland, prostate, testis, and thyroid.

The protein resides in the secreted. Its function is as follows. Stimulates feeding behavior, metabolic rate and locomotor activity and increases blood pressure. May have orexigenic activity. May promote aldosterone secretion by the adrenal gland. This is Orexigenic neuropeptide QRFP from Homo sapiens (Human).